A 212-amino-acid polypeptide reads, in one-letter code: Thiamine-phosphate synthase (212 aa).

4-amino-2-methyl-5-(diphosphooxymethyl)pyrimidine is bound by residues 43–47 (QYRNK) and asparagine 75. The Mg(2+) site is built by aspartate 76 and aspartate 95. Serine 114 contributes to the 4-amino-2-methyl-5-(diphosphooxymethyl)pyrimidine binding site. 141–143 (SMT) provides a ligand contact to 2-[(2R,5Z)-2-carboxy-4-methylthiazol-5(2H)-ylidene]ethyl phosphate. Lysine 144 lines the 4-amino-2-methyl-5-(diphosphooxymethyl)pyrimidine pocket. Position 171 (glycine 171) interacts with 2-[(2R,5Z)-2-carboxy-4-methylthiazol-5(2H)-ylidene]ethyl phosphate.

It belongs to the thiamine-phosphate synthase family. The cofactor is Mg(2+).

It catalyses the reaction 2-[(2R,5Z)-2-carboxy-4-methylthiazol-5(2H)-ylidene]ethyl phosphate + 4-amino-2-methyl-5-(diphosphooxymethyl)pyrimidine + 2 H(+) = thiamine phosphate + CO2 + diphosphate. The catalysed reaction is 2-(2-carboxy-4-methylthiazol-5-yl)ethyl phosphate + 4-amino-2-methyl-5-(diphosphooxymethyl)pyrimidine + 2 H(+) = thiamine phosphate + CO2 + diphosphate. The enzyme catalyses 4-methyl-5-(2-phosphooxyethyl)-thiazole + 4-amino-2-methyl-5-(diphosphooxymethyl)pyrimidine + H(+) = thiamine phosphate + diphosphate. The protein operates within cofactor biosynthesis; thiamine diphosphate biosynthesis; thiamine phosphate from 4-amino-2-methyl-5-diphosphomethylpyrimidine and 4-methyl-5-(2-phosphoethyl)-thiazole: step 1/1. Its function is as follows. Condenses 4-methyl-5-(beta-hydroxyethyl)thiazole monophosphate (THZ-P) and 2-methyl-4-amino-5-hydroxymethyl pyrimidine pyrophosphate (HMP-PP) to form thiamine monophosphate (TMP). This Nitrosomonas eutropha (strain DSM 101675 / C91 / Nm57) protein is Thiamine-phosphate synthase.